Reading from the N-terminus, the 247-residue chain is tRNA (guanine-N(7)-)-methyltransferase (247 aa).

S-adenosyl-L-methionine contacts are provided by residues glycine 70, 93–94, 128–129, and leucine 148; these read EI and NA. Residue aspartate 151 is part of the active site. 226 to 228 serves as a coordination point for S-adenosyl-L-methionine; sequence SEE.

It belongs to the class I-like SAM-binding methyltransferase superfamily. TrmB family.

The protein localises to the nucleus. It catalyses the reaction guanosine(46) in tRNA + S-adenosyl-L-methionine = N(7)-methylguanosine(46) in tRNA + S-adenosyl-L-homocysteine. Its pathway is tRNA modification; N(7)-methylguanine-tRNA biosynthesis. In terms of biological role, catalyzes the formation of N(7)-methylguanine at position 46 (m7G46) in tRNA. The chain is tRNA (guanine-N(7)-)-methyltransferase from Drosophila pseudoobscura pseudoobscura (Fruit fly).